The sequence spans 298 residues: Homoserine kinase (298 aa).

Residue 79–89 coordinates ATP; that stretch reads PIARGLGSSGA.

The protein belongs to the GHMP kinase family. Homoserine kinase subfamily.

Its subcellular location is the cytoplasm. It catalyses the reaction L-homoserine + ATP = O-phospho-L-homoserine + ADP + H(+). Its pathway is amino-acid biosynthesis; L-threonine biosynthesis; L-threonine from L-aspartate: step 4/5. Catalyzes the ATP-dependent phosphorylation of L-homoserine to L-homoserine phosphate. In Pyrobaculum islandicum (strain DSM 4184 / JCM 9189 / GEO3), this protein is Homoserine kinase.